We begin with the raw amino-acid sequence, 161 residues long: Phosphopantetheine adenylyltransferase (161 aa).

Ser-11 provides a ligand contact to substrate. ATP-binding positions include 11 to 12 (SF) and His-19. Substrate is bound by residues Lys-43, Leu-75, and Arg-89. Residues 90 to 92 (GLR), Glu-100, and 125 to 131 (YSFISSS) contribute to the ATP site.

It belongs to the bacterial CoaD family. Homohexamer. Requires Mg(2+) as cofactor.

It is found in the cytoplasm. The enzyme catalyses (R)-4'-phosphopantetheine + ATP + H(+) = 3'-dephospho-CoA + diphosphate. It functions in the pathway cofactor biosynthesis; coenzyme A biosynthesis; CoA from (R)-pantothenate: step 4/5. Functionally, reversibly transfers an adenylyl group from ATP to 4'-phosphopantetheine, yielding dephospho-CoA (dPCoA) and pyrophosphate. The polypeptide is Phosphopantetheine adenylyltransferase (Staphylococcus carnosus (strain TM300)).